We begin with the raw amino-acid sequence, 115 residues long: Evasin P1183 (115 aa).

A signal peptide spans 1-25 (MTRNWSFRVIFVSAMWCALLKFATL). 4 disulfides stabilise this stretch: Cys38-Cys58, Cys54-Cys94, Cys70-Cys99, and Cys89-Cys108. N-linked (GlcNAc...) asparagine glycosylation is found at Asn45, Asn72, and Asn103.

The protein localises to the secreted. Its function is as follows. Salivary chemokine-binding protein which binds to host chemokine CCL2. The protein is Evasin P1183 of Amblyomma triste (Neotropical tick).